We begin with the raw amino-acid sequence, 317 residues long: MTFDCRVCDQTLKRAQPPAASCMPLAEHEPMSPDSDAGCAGNPFTNLLALGKKDGAEKWHLSGSILDVYSDEQGISSANAGLTDAPCPSILPMRKEIAETDGRALAKERQKKDNHNLIERRRRYNINYRIKELGTLIPKSNDPDMRWNKGTILKASVDYIKWLQKEQQRARELEHRQKKLEHANRQLRLRIQELEIQARAHGLPILASLGTADVGTHITKQQTHPERNLGGCCLQLTPTQGTSPEFYEQAVAFSDPLSHFTDLSFSAALKEEQRLDGMLLSDTICPFGTDPLLSAISPAVSKASSRSSLSSEDGDEL.

A necessary for transcriptional transactivation region spans residues 1–90; that stretch reads MTFDCRVCDQ…GLTDAPCPSI (90 aa). A bHLH domain is found at 110–163; it reads QKKDNHNLIERRRRYNINYRIKELGTLIPKSNDPDMRWNKGTILKASVDYIKWL. Residues 242-317 are necessary for transcriptional transactivation; that stretch reads TSPEFYEQAV…SLSSEDGDEL (76 aa).

This sequence belongs to the MiT/TFE family. As to quaternary structure, homodimer. Forms heterodimers with MITF. Interacts with MITF. Forms heterodimers with TFE3. As to expression, expressed in osteoclast-like cells (at protein level). Expressed in cells of the mononuclear phagocyte lineage. Expressed in macrophages and in osteoclast-like cells.

It localises to the nucleus. Transcriptional regulator that acts as a repressor or an activator. Acts as a transcriptional transactivator on the proximal promoter region of the tartrate-resistant acid phosphatase (TRAP) E-box containing promoter. Collaborates with MITF in target gene activation. Acts as a transcriptional repressor on minimal promoter containing element F (that includes an E-box sequence). Binds to element F in an E-box sequence-specific manner. Acts as a transcriptional repressor on minimal promoter containing mu E3 enhancer sequence. Binds to mu E3 DNA sequence of the immunoglobulin heavy-chain gene enhancer. Binds DNA in a homo- or heterodimeric form. This Mus musculus (Mouse) protein is Transcription factor EC (Tfec).